A 260-amino-acid polypeptide reads, in one-letter code: DNA repair protein RecO (260 aa).

Belongs to the RecO family.

Involved in DNA repair and RecF pathway recombination. The protein is DNA repair protein RecO of Salinibacter ruber (strain DSM 13855 / M31).